A 71-amino-acid chain; its full sequence is General transcription and DNA repair factor IIH subunit TFB5 (71 aa).

Belongs to the TFB5 family. In terms of assembly, component of the 7-subunit TFIIH core complex.

It localises to the nucleus. The protein resides in the chromosome. Functionally, component of the general transcription and DNA repair factor IIH (TFIIH) core complex, which is involved in general and transcription-coupled nucleotide excision repair (NER) of damaged DNA and in RNA transcription by RNA polymerase II. In NER, TFIIH acts by opening DNA around the lesion to allow the excision of the damaged oligonucleotide and its replacement by a new DNA fragment. In transcription, TFIIH has an essential role in transcription initiation. When the pre-initiation complex (PIC) has been established, TFIIH is required for promoter opening and promoter escape. Necessary for the stability of the TFIIH complex and for the presence of normal levels of TFIIH in the cell. Required for efficient binding of TFIIH to damaged DNA. Dispensable for normal development, but required when transcription is challenged. The protein is General transcription and DNA repair factor IIH subunit TFB5 of Caenorhabditis elegans.